Here is a 267-residue protein sequence, read N- to C-terminus: tRNA pseudouridine synthase A (267 aa).

D51 functions as the Nucleophile in the catalytic mechanism. Y109 contributes to the substrate binding site.

It belongs to the tRNA pseudouridine synthase TruA family. In terms of assembly, homodimer.

It catalyses the reaction uridine(38/39/40) in tRNA = pseudouridine(38/39/40) in tRNA. Functionally, formation of pseudouridine at positions 38, 39 and 40 in the anticodon stem and loop of transfer RNAs. The chain is tRNA pseudouridine synthase A from Staphylococcus epidermidis (strain ATCC 12228 / FDA PCI 1200).